The chain runs to 413 residues: MADIPPDPPALNTTPANHAPPSPPPGSRKRRRPVLPSSSESEGKPDTESESSSTESSEDEAGDLRGGRRRSPRELGGRYFLDLSAESTTGTESEGTGPSDDDDDDASDGWLVDTPPRKSKRPRINLRLTSSPDRRAGVVFPEVWRSDRPIRAAQPQAPASLPGIAHAHRRSARQAQMRSGAAWTLDLHYIRQCVNQLFRILRAAPNPPGSANRLRHLVRDCYLMGYCRTRLGPRTWGRLLQISGGTWDVRLRNAIREVEAHFEPAAEPVCELPCLNARRYGPECDVGNLETNGGSTSDDEISDATDSDDTLASHSDTEGGPSPAGRENPESASGGAIAARLECEFGTFDWTSEEGSQPWLSAVVADTSSAERSGLPAPGACRATEAPEREDGCRKMRFPAACPYPCGHTFLRP.

A disordered region spans residues 1–124; sequence MADIPPDPPA…PPRKSKRPRI (124 aa). Over residues 62 to 76 the composition is skewed to basic and acidic residues; the sequence is GDLRGGRRRSPRELG. A compositionally biased stretch (low complexity) spans 84-97; that stretch reads SAESTTGTESEGTG. The residue at position 189 (Y189) is a Phosphotyrosine; by host. Disordered stretches follow at residues 289 to 334 and 370 to 390; these read LETN…SASG and AERS…PERE. The span at 297–309 shows a compositional bias: acidic residues; sequence SDDEISDATDSDD.

The protein belongs to the herpesviridae ICP22 family. In terms of processing, tyrosine phosphorylated.

It localises to the host nucleus. The protein operates within protein modification; protein ubiquitination. Functionally, functions as an E3 ubiquitin ligase and plays a role in the inhibition of innate immunity by preventing IFN-mediated signaling. Induces the ubiquitination and degradation of host STAT1, STAT2 and IRF9, resulting in the blockade of ISGF3 nuclear translocation. This chain is E3 ubiquitin ligase ICP22, found in Human herpesvirus 2 (strain HG52) (HHV-2).